The following is a 615-amino-acid chain: MRLFLLALLATLAVTQALVKEEIQAKEYLENLNKELAKRTNVETEAAWAYGSNITDENEKKKNEISAELAKFMKEVASDTTKFQWRSYQSEDLKRQFKALTKLGYAALPEDDYAELLDTLSAMESNFAKVKVCDYKDSTKCDLALDPEIEEVISKSRDHEELAYYWREFYDKAGTAVRSQFERYVELNTKAAKLNNFTSGAEAWLDEYEDDTFEQQLEDIFADIRPLYQQIHGYVRFRLRKHYGDAVVSETGPIPMHLLGNMWAQQWSEIADIVSPFPEKPLVDVSAEMEKQGYTPLKMFQMGDDFFTSMNLTKLPQDFWDKSIIEKPTDGRDLVCHASAWDFYLTDDVRIKQCTRVTQDQLFTVHHELGHIQYFLQYQHQPFVYRTGANPGFHEAVGDVLSLSVSTPKHLEKIGLLKDYVRDDEARINQLFLTALDKIVFLPFAFTMDKYRWSLFRGEVDKANWNCAFWKLRDEYSGIEPPVVRSEKDFDAPAKYHISADVEYLRYLVSFIIQFQFYKSACIKAGQYDPDNVELPLDNCDIYGSAAAGAAFHNMLSMGASKPWPDALEAFNGERIMSGKAIAEYFEPLRVWLEAENIKNNVHIGWTTSNKCVSS.

Residues 1–17 (MRLFLLALLATLAVTQA) form the signal peptide. Residues 19-607 (VKEEIQAKEY…IKNNVHIGWT (589 aa)) enclose the Peptidase M2 domain. Residue asparagine 53 is glycosylated (N-linked (GlcNAc...) asparagine). Cysteines 133 and 141 form a disulfide. N-linked (GlcNAc...) asparagine glycans are attached at residues asparagine 196 and asparagine 311. Cysteine 336 and cysteine 354 are oxidised to a cystine. Residue histidine 367 participates in Zn(2+) binding. Residue glutamate 368 is the Proton acceptor of the active site. Zn(2+) is bound by residues histidine 371 and glutamate 395. Histidine 497 serves as the catalytic Proton donor. An intrachain disulfide couples cysteine 522 to cysteine 540.

This sequence belongs to the peptidase M2 family. Zn(2+) is required as a cofactor. In terms of processing, glycosylated. In terms of tissue distribution, expressed in vesicular structures in spermatocytes and early spermatids (at protein level).

Its subcellular location is the secreted. The protein localises to the extracellular space. It carries out the reaction Release of a C-terminal dipeptide, oligopeptide-|-Xaa-Yaa, when Xaa is not Pro, and Yaa is neither Asp nor Glu. Thus, conversion of angiotensin I to angiotensin II, with increase in vasoconstrictor activity, but no action on angiotensin II.. With respect to regulation, inhibited by captopril and, to a lesser extent, by lisinopril, trandolaprilat, fosinoprilat and enalaprilat. Its function is as follows. May be involved in the specific maturation or degradation of a number of bioactive peptides. May play a role in the contractions of the heart, gut and testes, and in spermatid differentiation. In Drosophila melanogaster (Fruit fly), this protein is Angiotensin-converting enzyme (Ance).